A 159-amino-acid polypeptide reads, in one-letter code: Transcriptional repressor NrdR (159 aa).

The segment at 3–34 (CPFCRHEDTQVVDSRVSEDGAAIRRRRRCSAC) is a zinc-finger region. The region spanning 49–139 (PAVVKKDGSR…VYRRFEDVSE (91 aa)) is the ATP-cone domain.

This sequence belongs to the NrdR family. Requires Zn(2+) as cofactor.

Its function is as follows. Negatively regulates transcription of bacterial ribonucleotide reductase nrd genes and operons by binding to NrdR-boxes. This is Transcriptional repressor NrdR from Burkholderia vietnamiensis (strain G4 / LMG 22486) (Burkholderia cepacia (strain R1808)).